The following is a 308-amino-acid chain: Cytochrome c biogenesis protein CcsA (308 aa).

The next 7 membrane-spanning stretches (helical) occupy residues 2–22, 44–64, 71–91, 143–163, 212–232, 239–259, and 273–293; these read IVST…SILI, GMLV…IYLG, LSES…IAYF, MILG…LMVI, VIGL…VWAN, WSWD…AIYL, and AIVA…VNLV.

The protein belongs to the CcmF/CycK/Ccl1/NrfE/CcsA family. In terms of assembly, may interact with Ccs1.

It localises to the plastid membrane. In terms of biological role, required during biogenesis of c-type cytochromes (cytochrome c6 and cytochrome f) at the step of heme attachment. The polypeptide is Cytochrome c biogenesis protein CcsA (Cuscuta exaltata (Tall dodder)).